Consider the following 781-residue polypeptide: Aconitate hydratase, mitochondrial (781 aa).

Residues 1 to 27 constitute a mitochondrion transit peptide; that stretch reads MAPYSLLVTRLQKALGVRQYHVASVLC. Gln28 carries the post-translational modification Pyrrolidone carboxylic acid. Lys31 is modified (N6-succinyllysine). At Lys50 the chain carries N6-acetyllysine; alternate. Lys50 bears the N6-succinyllysine; alternate mark. Residue Gln99 participates in substrate binding. An N6-acetyllysine; alternate mark is found at Lys138 and Lys144. Lys138 and Lys144 each carry N6-succinyllysine; alternate. Substrate is bound at residue 192-194; the sequence is DSH. The residue at position 233 (Lys233) is an N6-acetyllysine; alternate. An N6-succinyllysine; alternate modification is found at Lys233. Cys385 contacts [4Fe-4S] cluster. At Lys411 the chain carries N6-succinyllysine. [4Fe-4S] cluster-binding residues include Cys448 and Cys451. Positions 474 and 479 each coordinate substrate. Residues Lys517 and Lys523 each carry the N6-acetyllysine; alternate modification. N6-succinyllysine; alternate is present on residues Lys517 and Lys523. Residues 524–537 show a composition bias toward basic and acidic residues; that stretch reads LEAPDADELPRAEF. The interval 524 to 561 is disordered; the sequence is LEAPDADELPRAEFDPGQDTYQHPPKDSSGQRVDVSPT. The residue at position 549 (Lys549) is an N6-succinyllysine. The segment covering 551 to 561 has biased composition (polar residues); sequence SSGQRVDVSPT. Ser559 carries the post-translational modification Phosphoserine. Lys573 carries the post-translational modification N6-acetyllysine; alternate. Lys573 bears the N6-succinyllysine; alternate mark. 2 positions are modified to N6-succinyllysine: Lys577 and Lys591. Position 605 is an N6-acetyllysine; alternate (Lys605). N6-succinyllysine; alternate is present on Lys605. Residue Arg607 participates in substrate binding. At Lys628 the chain carries N6-succinyllysine. Ser670 is subject to Phosphoserine. 670–671 is a substrate binding site; that stretch reads SR. Lys689 carries the N6-succinyllysine modification. N6-acetyllysine; alternate is present on residues Lys723 and Lys730. Lys723 and Lys730 each carry N6-succinyllysine; alternate. N6-acetyllysine is present on residues Lys736, Lys739, and Lys743.

Belongs to the aconitase/IPM isomerase family. Monomer. [4Fe-4S] cluster serves as cofactor. In terms of processing, forms covalent cross-links mediated by transglutaminase TGM2, between a glutamine and the epsilon-amino group of a lysine residue, forming homopolymers and heteropolymers.

Its subcellular location is the mitochondrion. It catalyses the reaction citrate = D-threo-isocitrate. The protein operates within carbohydrate metabolism; tricarboxylic acid cycle; isocitrate from oxaloacetate: step 2/2. Catalyzes the isomerization of citrate to isocitrate via cis-aconitate. This chain is Aconitate hydratase, mitochondrial (ACO2), found in Sus scrofa (Pig).